An 812-amino-acid polypeptide reads, in one-letter code: DNA replication licensing factor MCM3 (812 aa).

An MCM domain is found at 296–503; sequence IFNQLARSLA…QDREISDHVL (208 aa). Residues Gln354, Leu394, Glu395, Ala396, and Ala398 each coordinate ADP. Positions 478-481 match the Arginine finger motif; that stretch reads SRFD. The ATP site is built by Ala524 and Arg665. Residues 663-741 are disordered; the sequence is KKRKKQVEDD…SSATGEAKKP (79 aa). 2 stretches are compositionally biased toward acidic residues: residues 671-684 and 702-719; these read DDSE…EEET and GEEE…EQEM.

This sequence belongs to the MCM family. Component of the MCM2-7 complex. The complex forms a toroidal hexameric ring with the proposed subunit order MCM2-MCM6-MCM4-MCM7-MCM3-MCM5. Component of the CMG helicase complex, a hexameric ring of related MCM2-7 subunits stabilized by CDC45 and the tetrameric GINS complex.

It is found in the nucleus. Its subcellular location is the chromosome. It carries out the reaction ATP + H2O = ADP + phosphate + H(+). Functionally, acts as a component of the MCM2-7 complex (MCM complex) which is the replicative helicase essential for 'once per cell cycle' DNA replication initiation and elongation in eukaryotic cells. Core component of CDC45-MCM-GINS (CMG) helicase, the molecular machine that unwinds template DNA during replication, and around which the replisome is built. The active ATPase sites in the MCM2-7 ring are formed through the interaction surfaces of two neighboring subunits such that a critical structure of a conserved arginine finger motif is provided in trans relative to the ATP-binding site of the Walker A box of the adjacent subunit. The six ATPase active sites, however, are likely to contribute differentially to the complex helicase activity. Required for the entry in S phase and for cell division. This chain is DNA replication licensing factor MCM3 (MCM3), found in Gallus gallus (Chicken).